Here is a 1309-residue protein sequence, read N- to C-terminus: Clustered mitochondria protein homolog (1309 aa).

Residues 1-34 (MLLNGDCPESLKKEAAAAEPPRENGLDEAGPGDE) form a disordered region. The segment covering 9-25 (ESLKKEAAAAEPPRENG) has biased composition (basic and acidic residues). Ser279 and Ser281 each carry phosphoserine. The 243-residue stretch at 335–577 (RAEDAYTSRL…RTFPPDLNFL (243 aa)) folds into the Clu domain. Residues 636–651 (LETPSSLENGGPSSLE) show a composition bias toward polar residues. The tract at residues 636–674 (LETPSSLENGGPSSLESKSEDPPGQEAGSEEEGSSASGL) is disordered. Phosphoserine occurs at positions 654, 664, and 723. TPR repeat units lie at residues 978-1011 (AFHF…FNNV), 1020-1053 (CACL…SERV), 1104-1137 (ALLD…STKY), and 1146-1179 (ALSH…YKTQ). Over residues 1264–1278 (HQLQEASRNRDRAEE) the composition is skewed to basic and acidic residues. The disordered stretch occupies residues 1264 to 1309 (HQLQEASRNRDRAEEPMATEPAPAGAPGDLGSQPPAAKDPSPSVQG). The span at 1279–1290 (PMATEPAPAGAP) shows a compositional bias: low complexity.

This sequence belongs to the CLU family.

It is found in the cytoplasm. It localises to the cytoplasmic granule. MRNA-binding protein involved in proper cytoplasmic distribution of mitochondria. Specifically binds mRNAs of nuclear-encoded mitochondrial proteins in the cytoplasm and regulates transport or translation of these transcripts close to mitochondria, playing a role in mitochondrial biogenesis. This chain is Clustered mitochondria protein homolog (CLUH), found in Homo sapiens (Human).